A 279-amino-acid chain; its full sequence is NAD kinase (279 aa).

Asp-57 (proton acceptor) is an active-site residue. Residues 57–58, 133–134, Arg-159, Asp-161, and 172–177 contribute to the NAD(+) site; these read DG, NE, and TAYNKS.

Belongs to the NAD kinase family. The cofactor is a divalent metal cation.

Its subcellular location is the cytoplasm. It catalyses the reaction NAD(+) + ATP = ADP + NADP(+) + H(+). Its function is as follows. Involved in the regulation of the intracellular balance of NAD and NADP, and is a key enzyme in the biosynthesis of NADP. Catalyzes specifically the phosphorylation on 2'-hydroxyl of the adenosine moiety of NAD to yield NADP. The polypeptide is NAD kinase (Streptococcus pyogenes serotype M28 (strain MGAS6180)).